The following is a 377-amino-acid chain: Presenilin-associated rhomboid-like protein, mitochondrial (377 aa).

Residues 1–52 constitute a mitochondrion transit peptide; sequence MAWRGWAQRGWGCGQAWTLPVCGGSYEELTAALAPSRLLRRRFNFFIQQKCG. Residues 53–99 lie on the Mitochondrial matrix side of the membrane; it reads FRKAPRKVEPRRSDTSSEAYKRSALIPPVEETAFYPSPYPIRTLVKP. 2 positions are modified to phosphoserine: serine 65 and serine 68. The chain crosses the membrane as a helical span at residues 100 to 119; it reads LFFTVGFTGCAFGSAAIWQY. Topologically, residues 120–165 are mitochondrial intermembrane; the sequence is ESLKSKVQSYFDGIKADWLDSIRPQKEGDFRKEINKWWNNLSDGQR. A helical membrane pass occupies residues 166–185; it reads TVTGIIAANVFVFCLWRVPS. At 186-205 the chain is on the mitochondrial matrix side; it reads LQRTMIRYFTSNPASKVLCS. Residues 206-228 form a helical membrane-spanning segment; it reads PMLLSTFSHFSLFHMAANMYVLW. At 229–242 the chain is on the mitochondrial intermembrane side; the sequence is SFSSSIVNILGQEQ. Residues 243–260 form a helical membrane-spanning segment; that stretch reads FMAVYLSAGVISTFVSYV. At 261–270 the chain is on the mitochondrial matrix side; that stretch reads CKVATGRYGP. The helical transmembrane segment at 271-287 threads the bilayer; sequence SLGASGAIMTVLAAVCT. Serine 275 functions as the Nucleophile in the catalytic mechanism. At 288–293 the chain is on the mitochondrial intermembrane side; it reads KIPEGR. A helical membrane pass occupies residues 294–316; that stretch reads LAIIFLPMFTFTAGNALKAIIAM. The Mitochondrial matrix portion of the chain corresponds to 317–330; that stretch reads DTAGMILGWKFFDH. The chain crosses the membrane as a helical span at residues 331–352; that stretch reads AAHLGGALFGIWYITYGHELIW. Histidine 333 is a catalytic residue. Residues 353-377 are Mitochondrial intermembrane-facing; that stretch reads KNREPLVKIWHEMRTNSPKKGGGSK.

The protein belongs to the peptidase S54 family. In terms of assembly, interacts with PSEN1 and PSEN2. Binds OPA1. In terms of processing, P-beta is proteolytically processed (beta-cleavage) in a PARL-dependent manner.

Its subcellular location is the mitochondrion inner membrane. It is found in the nucleus. It catalyses the reaction Cleaves type-1 transmembrane domains using a catalytic dyad composed of serine and histidine that are contributed by different transmembrane domains.. Functionally, required for the control of apoptosis during postnatal growth. Essential for proteolytic processing of an antiapoptotic form of OPA1 which prevents the release of mitochondrial cytochrome c in response to intrinsic apoptotic signals. Required for the maturation of PINK1 into its 52kDa mature form after its cleavage by mitochondrial-processing peptidase (MPP). Promotes cleavage of serine/threonine-protein phosphatase PGAM5 in damaged mitochondria in response to loss of mitochondrial membrane potential. Mediates differential cleavage of PINK1 and PGAM5 depending on the health status of mitochondria, disassociating from PINK1 and associating with PGAM5 in response to mitochondrial membrane potential loss. Required for processing of CLPB into a form with higher protein disaggregase activity by removing an autoinhibitory N-terminal peptide. Promotes processing of DIABLO/SMAC in the mitochondrion which is required for DIABLO apoptotic activity. Also required for cleavage of STARD7 and TTC19. Promotes changes in mitochondria morphology regulated by phosphorylation of P-beta domain. This is Presenilin-associated rhomboid-like protein, mitochondrial (PARL) from Bos taurus (Bovine).